The chain runs to 410 residues: Phospho-N-acetylmuramoyl-pentapeptide-transferase (410 aa).

A run of 10 helical transmembrane segments spans residues 23–43 (YITF…TIYG), 73–93 (TPTM…FLFA), 96–116 (HNIY…IGFV), 132–152 (GIFK…VLYF), 215–235 (WAWL…SNGA), 248–268 (TSAV…NIIF), 285–305 (VFIS…SFPA), 307–327 (VFMG…LAIA), 332–352 (ILIV…IIQV), and 387–407 (KIVT…IVTL).

Belongs to the glycosyltransferase 4 family. MraY subfamily. Requires Mg(2+) as cofactor.

It localises to the cell inner membrane. It carries out the reaction UDP-N-acetyl-alpha-D-muramoyl-L-alanyl-gamma-D-glutamyl-meso-2,6-diaminopimeloyl-D-alanyl-D-alanine + di-trans,octa-cis-undecaprenyl phosphate = di-trans,octa-cis-undecaprenyl diphospho-N-acetyl-alpha-D-muramoyl-L-alanyl-D-glutamyl-meso-2,6-diaminopimeloyl-D-alanyl-D-alanine + UMP. The protein operates within cell wall biogenesis; peptidoglycan biosynthesis. In terms of biological role, catalyzes the initial step of the lipid cycle reactions in the biosynthesis of the cell wall peptidoglycan: transfers peptidoglycan precursor phospho-MurNAc-pentapeptide from UDP-MurNAc-pentapeptide onto the lipid carrier undecaprenyl phosphate, yielding undecaprenyl-pyrophosphoryl-MurNAc-pentapeptide, known as lipid I. The protein is Phospho-N-acetylmuramoyl-pentapeptide-transferase of Flavobacterium johnsoniae (strain ATCC 17061 / DSM 2064 / JCM 8514 / BCRC 14874 / CCUG 350202 / NBRC 14942 / NCIMB 11054 / UW101) (Cytophaga johnsonae).